The chain runs to 352 residues: O(6)-methylguanine-induced apoptosis 2 (352 aa).

7 STPGR repeats span residues 80 to 90 (NPGPGAYNVAR), 124 to 139 (PAPN…FSKK), 165 to 171 (PAPNQYS), 205 to 235 (GPSP…KTSR), 244 to 263 (NPGP…KKII), 286 to 295 (PGPGHYDIVD), and 325 to 335 (LPGPGAYHPEI).

The protein belongs to the STPG1 family.

The protein resides in the cytoplasm. It localises to the nucleus. In terms of biological role, may positively contribute to the induction of apoptosis triggered by O(6)-methylguanine. This chain is O(6)-methylguanine-induced apoptosis 2 (stpg1), found in Xenopus laevis (African clawed frog).